Consider the following 1370-residue polypeptide: DNA-directed RNA polymerase subunit beta (1370 aa).

Belongs to the RNA polymerase beta chain family. In terms of assembly, the RNAP catalytic core consists of 2 alpha, 1 beta, 1 beta' and 1 omega subunit. When a sigma factor is associated with the core the holoenzyme is formed, which can initiate transcription.

It carries out the reaction RNA(n) + a ribonucleoside 5'-triphosphate = RNA(n+1) + diphosphate. In terms of biological role, DNA-dependent RNA polymerase catalyzes the transcription of DNA into RNA using the four ribonucleoside triphosphates as substrates. This Verminephrobacter eiseniae (strain EF01-2) protein is DNA-directed RNA polymerase subunit beta.